The chain runs to 342 residues: uncharacterized protein (342 aa).

The region spanning 155 to 309 is the Nudix hydrolase domain; the sequence is TYGIHINGYV…KPNCALVMVD (155 aa).

This is an uncharacterized protein from Saccharomyces cerevisiae (strain ATCC 204508 / S288c) (Baker's yeast).